A 627-amino-acid chain; its full sequence is Carene synthase, chloroplastic (627 aa).

Residues 1 to 36 (MSVISILPLASKSCLYKSLMSSTHELKALCRPIATL) constitute a chloroplast transit peptide. Mg(2+) contacts are provided by Asp378, Asp382, and Asp530. The DDXXD motif motif lies at 378–382 (DDMYD).

The protein belongs to the terpene synthase family. Tpsd subfamily. It depends on Mg(2+) as a cofactor. Mn(2+) serves as cofactor.

It localises to the plastid. The protein resides in the chloroplast. It carries out the reaction (2E)-geranyl diphosphate = (+)-car-3-ene + diphosphate. It functions in the pathway terpene metabolism; oleoresin biosynthesis. Functionally, terpene synthase (TPS) involved in defensive oleoresin formation in conifers in response to insect attack or other injury. In Picea abies (Norway spruce), this protein is Carene synthase, chloroplastic (JF67).